The primary structure comprises 229 residues: Matrix protein (229 aa).

A dynamin binding motif is present at residues 2–4 (KSI). The segment at 11–36 (AKKEKKREKKSNHGSHSMEWESPPSY) is disordered. The span at 13–23 (KEKKREKKSNH) shows a compositional bias: basic residues. Positions 33 to 36 (PPSY) match the PPXY motif motif. The short motif at 42–45 (PSAP) is the PTAP/PSAP motif element.

The protein belongs to the vesiculoviruses matrix protein family. In terms of assembly, homomultimer. Interacts with viral nucleocapsid; this interaction contributes to the virion assembly. Interacts with the viral envelope glycoprotein; this interaction contributes to the virion assembly. Interacts with host RAE1-NUP98 complex. Interacts with host NEDD4 and TSG101. Interacts with host dynamin. Interacts with host NDUFAF4; the interaction inhibits viral propagation and is independent of interferon activation. Interacts with host GTF2H5; the interaction may inhibit host transcription. In terms of processing, phosphorylated by host.

It localises to the virion. The protein resides in the host endomembrane system. It is found in the host nucleus membrane. The protein localises to the host nucleus. Its subcellular location is the host cytoplasm. Forms a double layer around the helical nucleocapsid, the inner matrix layer binding to the N helix and the outer matrix layer binding to the envelope glycoprotein. Plays a major role in assembly and budding of virion, by recruiting cellular partners of the ESCRT complexes that play a key role in releasing the budding particle from the host membrane. Condensates the ribonucleocapsid core during virus assembly. Inhibits the host mRNA nuclear export thereby inducing the shut off of cellular transcription and preventing the interferon signaling and the establishment of antiviral state in infected cells. This shutoff presumably inhibits interferon signaling and thus establishment of antiviral state in virus infected cells. Induces cell-rounding, cytoskeleton disorganization and apoptosis in infected cell. Inhibits host transcription, possibly through interaction with host DNA repair factor IIH/TFIIH GTF2H5 subunit. This chain is Matrix protein (M), found in Piry virus (PIRYV).